The chain runs to 343 residues: Anthranilate phosphoribosyltransferase (343 aa).

Residues glycine 84, 87-88 (GD), threonine 92, 94-97 (NIST), 112-120 (KHGNRGVSS), and serine 124 contribute to the 5-phospho-alpha-D-ribose 1-diphosphate site. Residue glycine 84 participates in anthranilate binding. Serine 96 is a Mg(2+) binding site. Position 115 (asparagine 115) interacts with anthranilate. An anthranilate-binding site is contributed by arginine 170. The Mg(2+) site is built by aspartate 229 and glutamate 230.

The protein belongs to the anthranilate phosphoribosyltransferase family. Homodimer. Mg(2+) is required as a cofactor.

It carries out the reaction N-(5-phospho-beta-D-ribosyl)anthranilate + diphosphate = 5-phospho-alpha-D-ribose 1-diphosphate + anthranilate. The protein operates within amino-acid biosynthesis; L-tryptophan biosynthesis; L-tryptophan from chorismate: step 2/5. Catalyzes the transfer of the phosphoribosyl group of 5-phosphorylribose-1-pyrophosphate (PRPP) to anthranilate to yield N-(5'-phosphoribosyl)-anthranilate (PRA). This Burkholderia ambifaria (strain MC40-6) protein is Anthranilate phosphoribosyltransferase.